We begin with the raw amino-acid sequence, 1026 residues long: Lon protease homolog, mitochondrial (1026 aa).

A mitochondrion-targeting transit peptide spans 1-29 (MLGTRVTRAVYTRAPLKLQLRALGLHRRY). Disordered stretches follow at residues 29 to 55 (YVHN…DKKL) and 185 to 206 (ASEE…DKVS). Positions 62–345 (MLALPISRRP…KSLLVLKKEL (284 aa)) constitute a Lon N-terminal domain. A compositionally biased stretch (acidic residues) spans 185–194 (ASEETKDEET). Positions 195 to 206 (VDKTESATDKVS) are enriched in basic and acidic residues. 497 to 504 (GPPGVGKT) contributes to the ATP binding site. Residues 711–785 (TEPLVSTSEE…EEEEDTSMIV (75 aa)) form a disordered region. Positions 714-737 (LVSTSEEPQLSQTNQNISSSSAED) are enriched in polar residues. In terms of domain architecture, Lon proteolytic spans 815-1001 (TTPPGVIMGL…DDIYKRLFSG (187 aa)). Catalysis depends on residues Ser-907 and Lys-950.

Belongs to the peptidase S16 family. In terms of assembly, homohexamer or homoheptamer. Organized in a ring with a central cavity.

It is found in the mitochondrion matrix. It carries out the reaction Hydrolysis of proteins in presence of ATP.. In terms of biological role, ATP-dependent serine protease that mediates the selective degradation of misfolded, unassembled or oxidatively damaged polypeptides as well as certain short-lived regulatory proteins in the mitochondrial matrix. May also have a chaperone function in the assembly of inner membrane protein complexes. Participates in the regulation of mitochondrial gene expression and in the maintenance of the integrity of the mitochondrial genome. Binds to mitochondrial DNA in a site-specific manner. The polypeptide is Lon protease homolog, mitochondrial (Candida glabrata (strain ATCC 2001 / BCRC 20586 / JCM 3761 / NBRC 0622 / NRRL Y-65 / CBS 138) (Yeast)).